A 211-amino-acid chain; its full sequence is Arginine exporter protein ArgO (211 aa).

6 consecutive transmembrane segments (helical) span residues 1–21 (MISY…PLGP), 37–57 (LMIA…GIFG), 68–88 (LLAL…FGAL), 111–131 (IIAT…DTFV), 147–167 (WFAL…ALLA), and 179–199 (AQRI…FQLA).

Belongs to the LysE/ArgO transporter (TC 2.A.75) family.

It is found in the cell inner membrane. It carries out the reaction L-arginine(in) = L-arginine(out). In terms of biological role, involved in the export of arginine. Important to control the intracellular level of arginine and the correct balance between arginine and lysine. This Salmonella schwarzengrund (strain CVM19633) protein is Arginine exporter protein ArgO.